We begin with the raw amino-acid sequence, 383 residues long: D-alanine--D-alanine ligase (383 aa).

Residues 164-373 (KLAFQAAGLE…YSALIDELIT (210 aa)) form the ATP-grasp domain. ATP is bound at residue 196-251 (VAELGFPVFVKPARAGSSFGITRVDEPSQLDAAIATAREHDLKLVVEAGIDGREIE). Mg(2+) is bound by residues Asp327, Glu340, and Asn342.

It belongs to the D-alanine--D-alanine ligase family. It depends on Mg(2+) as a cofactor. Mn(2+) serves as cofactor.

Its subcellular location is the cytoplasm. The catalysed reaction is 2 D-alanine + ATP = D-alanyl-D-alanine + ADP + phosphate + H(+). It participates in cell wall biogenesis; peptidoglycan biosynthesis. In terms of biological role, cell wall formation. The chain is D-alanine--D-alanine ligase from Kocuria rhizophila (strain ATCC 9341 / DSM 348 / NBRC 103217 / DC2201).